Consider the following 110-residue polypeptide: Protein YcgL (110 aa).

Positions 14 to 98 constitute a YcgL domain; that stretch reads MFCVIYRSSK…PPEDLLKQHL (85 aa). The interval 88-110 is disordered; it reads PPPEDLLKQHLSSVGQNTSHADR. The segment covering 97–110 has biased composition (polar residues); the sequence is HLSSVGQNTSHADR.

This is Protein YcgL from Salmonella typhi.